We begin with the raw amino-acid sequence, 642 residues long: Threonine--tRNA ligase (642 aa).

Positions 1–61 (MPVITLPDGS…VDDASVAIIT (61 aa)) constitute a TGS domain. The tract at residues 243–534 (DHRKIGKQLD…LTEEYAGFFP (292 aa)) is catalytic. Residues C334, H385, and H511 each contribute to the Zn(2+) site.

This sequence belongs to the class-II aminoacyl-tRNA synthetase family. In terms of assembly, homodimer. Zn(2+) is required as a cofactor.

The protein localises to the cytoplasm. It carries out the reaction tRNA(Thr) + L-threonine + ATP = L-threonyl-tRNA(Thr) + AMP + diphosphate + H(+). Functionally, catalyzes the attachment of threonine to tRNA(Thr) in a two-step reaction: L-threonine is first activated by ATP to form Thr-AMP and then transferred to the acceptor end of tRNA(Thr). Also edits incorrectly charged L-seryl-tRNA(Thr). The polypeptide is Threonine--tRNA ligase (Erwinia tasmaniensis (strain DSM 17950 / CFBP 7177 / CIP 109463 / NCPPB 4357 / Et1/99)).